The sequence spans 523 residues: (R)-citramalate synthase (523 aa).

One can recognise a Pyruvate carboxyltransferase domain in the interval 6 to 272 (VEVLDTTLRD…KGNESLKKLK (267 aa)).

Belongs to the alpha-IPM synthase/homocitrate synthase family.

The enzyme catalyses pyruvate + acetyl-CoA + H2O = (3R)-citramalate + CoA + H(+). The protein operates within amino-acid biosynthesis; L-isoleucine biosynthesis; 2-oxobutanoate from pyruvate: step 1/3. Inhibited by isoleucine. Functionally, catalyzes the condensation of pyruvate and acetyl-coenzyme A to form (R)-citramalate. Makes part of a pathway for isoleucine biosynthesis, i.e. the citramalate-dependent pathway. Also displays a low alpha-isopropylmalate synthase activity, using 2-oxoisovalerate as substrate, but is unable to use 2-oxoglutarate. This is (R)-citramalate synthase from Sulfolobus acidocaldarius (strain ATCC 33909 / DSM 639 / JCM 8929 / NBRC 15157 / NCIMB 11770).